The sequence spans 144 residues: Peptide methionine sulfoxide reductase MsrB (144 aa).

Positions 5–128 (QEELRQRIGH…NSAALDFIPY (124 aa)) constitute a MsrB domain. C117 (nucleophile) is an active-site residue.

The protein belongs to the MsrB Met sulfoxide reductase family.

The catalysed reaction is L-methionyl-[protein] + [thioredoxin]-disulfide + H2O = L-methionyl-(R)-S-oxide-[protein] + [thioredoxin]-dithiol. This Streptococcus agalactiae serotype Ia (strain ATCC 27591 / A909 / CDC SS700) protein is Peptide methionine sulfoxide reductase MsrB.